The following is a 257-amino-acid chain: MGDPDNALPSALPLTGERTIPGLAEENYWFRRHEVVYQRLAHRCAGRDVLEAGCGEGYGADLIADVARRVIGLDYDEATVAHVRARYPRVDIRHGNLAELPLPDASVDVVVNFQVIEHLWDQAQFVSECFRVLRPGGVFLVSTPNRITFSPGRDTPLNPFHTRELNAAELTELLETAGFEVEDTLGVFHGAGLAELDARHGGSIIEAQVQRAVADAPWDEQLLADVAAVRTDDFDLTPAAERDIDDSLDLVAIAVRP.

Belongs to the methyltransferase superfamily.

Functionally, probable S-adenosylmethionine-dependent methyltransferase required for the 6-O-methylation of the polysaccharide backbone of 6-O-methylglucosyl lipopolysaccharides (MGLP). In Mycolicibacterium smegmatis (strain ATCC 700084 / mc(2)155) (Mycobacterium smegmatis), this protein is Probable S-adenosylmethionine-dependent methyltransferase MSMEG_2350/MSMEI_2290.